A 639-amino-acid chain; its full sequence is Threonine--tRNA ligase (639 aa).

A TGS domain is found at 1–61; the sequence is MIHITLPDGS…TQDSPLSIVT (61 aa). Residues 242 to 533 form a catalytic region; the sequence is DHRKLGRELD…LIEEHAGALP (292 aa). Cys-333, His-384, and His-510 together coordinate Zn(2+).

The protein belongs to the class-II aminoacyl-tRNA synthetase family. In terms of assembly, homodimer. Zn(2+) serves as cofactor.

It localises to the cytoplasm. It carries out the reaction tRNA(Thr) + L-threonine + ATP = L-threonyl-tRNA(Thr) + AMP + diphosphate + H(+). Its function is as follows. Catalyzes the attachment of threonine to tRNA(Thr) in a two-step reaction: L-threonine is first activated by ATP to form Thr-AMP and then transferred to the acceptor end of tRNA(Thr). Also edits incorrectly charged L-seryl-tRNA(Thr). This chain is Threonine--tRNA ligase, found in Acidovorax sp. (strain JS42).